Here is a 258-residue protein sequence, read N- to C-terminus: UPF0246 protein Pnuc_0753 (258 aa).

It belongs to the UPF0246 family.

In Polynucleobacter asymbioticus (strain DSM 18221 / CIP 109841 / QLW-P1DMWA-1) (Polynucleobacter necessarius subsp. asymbioticus), this protein is UPF0246 protein Pnuc_0753.